The sequence spans 1200 residues: MERNLQKQLYGISRESSPGARRYSMPAASADSTRKSIFGGSASCAQMSGSLKRTALTNSRLSLSVRSTQSIAGIRSDYNSVESFGCPLPVVVNEALTFAGPGAGTVTAKVTQNGWAWVVQGRRLLIWQYKDTAKSGSPPRVGKLARRGGGLAQCRELTLPYSDLGHKSDLISVFQTEGQQMASCIAVSATGEVRYWSSIAHDGNSVDLSILTGQEFVQLLSLPTQQGYLAVTTTCNLVFLRVGLTNGRYTLHHKTIKPATSFLGGFGKKFASILIGMNTGADKDQTLVGMCCESNLESGETIVAVLSDRAIQRWSLSNNGNTENLLYEDADMLRRIREEFITNFWKFRLPADSLEIDLHLLDFHVVKNKAYILAGAVNAAHAPQMCYALVTGTAQAERMLLESFTPLNMNKFFSAKTEEDCLSVRFVVGSSHIYLYTSKVVYPLHLTNSVPTAELEAEKIEFHQHDDRILSAVICSQLPLFFSRTHGLVSITPGDFDGTEMMNMSSCNTPDLYAPNSCNASFAVADHSALTNSTNNLHLFELDPDEMYNELSDEVGQLKAAFLYHMKRNSNMVKTIVDELLRNVTAADPSGAPMDAYKLDRIVITIAEDLAEDIPIADPRWEEALADQEMNRHAIGSSRSMQIINQLRDKIIAFQHFITFLHSSLVWDKLNVIPCGSHSLKPTGCILADISEKIVAAMALRSIQTKLPKLIEEAIDATVALWHEEPQGSLTYQDIFYVKLSRFQNVFEALADIADDRIAAQNQTTISVAHFVNEINSIVLDVLGQVFKYRKQHASSFRLSHEKLPSYENLPWTAMAGSAGVRDTLTRLIDISVRYGSHCVSETELKQQLYQQIFELIDLVLDGRKTYLKSVRDTEKFNVLQQQFEAQRRELISVLIKDRQYEYAAKIAEKYLDFQSLVLICDETQDKERLEDYTRKYEEYDFSQFAINWHLRQNRHGEVFERFKGNQTALAQFMRDHPSLGWIQLIFNGDFERAAKVLYELAQCETEFVARKKSMLSLAKLAAFAAAESDLTAQVEKINADLTLVEYQSQLGHDVLESFGFDPAEQKVLKAEEIISLYIAEENETASETEFRKALELLSYVEQPYDMRHKIWCAAIKRDNWTDYDPNNAVHYMQKLLFYKIIEISQLMGNDSENVLPPMEDFLESVELGDLPQQKPFQYLLKLTYEYVADMFKQPDDMEL.

The disordered stretch occupies residues 1 to 28 (MERNLQKQLYGISRESSPGARRYSMPAA).

Belongs to the nucleoporin Nup133 family. As to quaternary structure, forms part of the Nup107-Nup160 subcomplex in the nuclear pore.

It is found in the nucleus. It localises to the nuclear pore complex. Its function is as follows. Probable component of the nuclear pore complex (NPC). Plays a role in NPC assembly and/or maintenance. The sequence is that of Nuclear pore complex protein Nup133 from Drosophila melanogaster (Fruit fly).